A 172-amino-acid polypeptide reads, in one-letter code: uncharacterized protein (172 aa).

The tract at residues 130–154 (EQEKGAAPQEGKDWQVISEEDKKNQ) is disordered.

This is an uncharacterized protein from Bacillus subtilis (strain 168).